A 210-amino-acid polypeptide reads, in one-letter code: 7-carboxy-7-deazaguanine synthase (210 aa).

Substrate is bound by residues 25–27 (IQG) and R40. A Radical SAM core domain is found at 31–210 (HTGTAAYFIR…LQTHKYLNIP (180 aa)). [4Fe-4S] cluster contacts are provided by C44, C48, and C51. T84 serves as a coordination point for substrate. S-adenosyl-L-methionine is bound by residues G86 and 127-129 (SPK). A substrate-binding site is contributed by P210.

Belongs to the radical SAM superfamily. 7-carboxy-7-deazaguanine synthase family. In terms of assembly, homodimer. The cofactor is [4Fe-4S] cluster. S-adenosyl-L-methionine is required as a cofactor. Mg(2+) serves as cofactor.

The enzyme catalyses 6-carboxy-5,6,7,8-tetrahydropterin + H(+) = 7-carboxy-7-deazaguanine + NH4(+). Its pathway is purine metabolism; 7-cyano-7-deazaguanine biosynthesis. Functionally, catalyzes the complex heterocyclic radical-mediated conversion of 6-carboxy-5,6,7,8-tetrahydropterin (CPH4) to 7-carboxy-7-deazaguanine (CDG), a step common to the biosynthetic pathways of all 7-deazapurine-containing compounds. The sequence is that of 7-carboxy-7-deazaguanine synthase from Flavobacterium psychrophilum (strain ATCC 49511 / DSM 21280 / CIP 103535 / JIP02/86).